The primary structure comprises 617 residues: mRNA export factor MEX67 (617 aa).

A compositionally biased stretch (gly residues) spans 1–10 (MSYRGRGGGY). Positions 1-24 (MSYRGRGGGYNNNRGQFSSGPHQH) are disordered. LRR repeat units lie at residues 185-206 (DVDS…TSMA), 211-232 (KLQN…ETWR), and 237-258 (FLRE…AEIQ). Residues 309–499 (LATNFIANYL…MIVASDTLLI (191 aa)) enclose the NTF2 domain. 2 disordered regions span residues 442 to 469 (EVDG…HKRI) and 513 to 554 (LPSN…TTAD). Low complexity-rich tracts occupy residues 445-459 (GSAS…GGSR) and 526-542 (ATST…TTPQ). In terms of domain architecture, TAP-C spans 565-617 (QIQQELLVKILLETKLNINYGIMLCEQSNWDYQQASVNFKNSAASLPSDAFVQ).

This sequence belongs to the NXF family. In terms of assembly, interacts with nucleoporin complex protein MTR2.

The protein resides in the nucleus. It is found in the cytoplasm. In terms of biological role, involved in the export of mRNA from the nucleus to the cytoplasm. The sequence is that of mRNA export factor MEX67 from Candida albicans (strain SC5314 / ATCC MYA-2876) (Yeast).